The primary structure comprises 179 residues: Ubiquitin-conjugating enzyme E2 C (179 aa).

Over residues 1–14 (MASQNRDPAATSVT) the composition is skewed to polar residues. Residues 1–31 (MASQNRDPAATSVTAARKGAEPSGGAARGPV) form a disordered region. At Ala2 the chain carries N-acetylalanine. A Phosphoserine modification is found at Ser3. The region spanning 30-175 (PVGKRLQQEL…LQETYSKQVT (146 aa)) is the UBC core domain. Residue Cys114 is the Glycyl thioester intermediate of the active site.

Belongs to the ubiquitin-conjugating enzyme family. As to quaternary structure, component of the APC/C complex, composed of at least 14 distinct subunits that assemble into a complex of at least 19 chains with a combined molecular mass of around 1.2 MDa. Within this complex, directly interacts with ANAPC2. In terms of processing, autoubiquitinated by the APC/C complex, leading to its degradation by the proteasome. Its degradation plays a central role in APC/C regulation, allowing cyclin-A accumulation before S phase entry. APC/C substrates inhibit the autoubiquitination of UBE2C/UBCH10 but not its E2 function, hence APC/C remaining active until its substrates have been destroyed.

It carries out the reaction S-ubiquitinyl-[E1 ubiquitin-activating enzyme]-L-cysteine + [E2 ubiquitin-conjugating enzyme]-L-cysteine = [E1 ubiquitin-activating enzyme]-L-cysteine + S-ubiquitinyl-[E2 ubiquitin-conjugating enzyme]-L-cysteine.. It catalyses the reaction S-ubiquitinyl-[E1 ubiquitin-activating enzyme]-L-cysteine + [acceptor protein]-L-lysine = [E1 ubiquitin-activating enzyme]-L-cysteine + N(6)-monoubiquitinyl-[acceptor protein]-L-lysine.. The protein operates within protein modification; protein ubiquitination. Its function is as follows. Accepts ubiquitin from the E1 complex and catalyzes its covalent attachment to other proteins. In vitro catalyzes 'Lys-11'- and 'Lys-48'-linked polyubiquitination. Acts as an essential factor of the anaphase promoting complex/cyclosome (APC/C), a cell cycle-regulated ubiquitin ligase that controls progression through mitosis. Acts by initiating 'Lys-11'-linked polyubiquitin chains on APC/C substrates, leading to the degradation of APC/C substrates by the proteasome and promoting mitotic exit. This is Ubiquitin-conjugating enzyme E2 C (UBE2C) from Macaca fascicularis (Crab-eating macaque).